The following is a 523-amino-acid chain: Synaptotagmin-10 (523 aa).

Over 1–55 (MSFRKEDGVSSLCQKALHIITELCFAGQVEWDKCSGIFPADRSGQGGGGTDISVS) the chain is Vesicular. Residues 13-35 (CQKALHIITELCFAGQVEWDKCS) form a cysteine motif region. The chain crosses the membrane as a helical span at residues 56-76 (LLAVVVSFCGLALLVVSLFVF). Residues 77–523 (WKLCWPCWKS…CSSPRPPSTP (447 aa)) are Cytoplasmic-facing. Thr136 bears the Phosphothreonine mark. C2 domains lie at 231–352 (TCGK…TVWK) and 363–496 (DLGE…THWH). Residues Asp262, Asp268, Asp320, Phe321, Asp322, Ser325, Asp328, Asp394, Asp400, Asp454, and Asp456 each coordinate Ca(2+).

Belongs to the synaptotagmin family. Homodimer; disulfide-linked via the cysteine motif. Can also form heterodimers with SYT3, SYT6, SYT7 and SYT9. The cofactor is Ca(2+).

It localises to the cytoplasmic vesicle. The protein resides in the secretory vesicle membrane. Its function is as follows. Ca(2+) sensor specifically required for the Ca(2+)-dependent exocytosis of secretory vesicles containing IGF1 in neurons of the olfactory bulb. Exocytosis of IGF1 is required for sensory perception of smell. Not involved in Ca(2+)-dependent synaptic vesicle exocytosis. Acts through Ca(2+) and phospholipid binding to the C2 domain: Ca(2+) induces binding of the C2-domains to phospholipid membranes and to assembled SNARE-complexes; both actions contribute to triggering exocytosis. The sequence is that of Synaptotagmin-10 (Syt10) from Rattus norvegicus (Rat).